We begin with the raw amino-acid sequence, 381 residues long: Cytochrome b (381 aa).

4 helical membrane-spanning segments follow: residues phenylalanine 34–methionine 54, tryptophan 78–isoleucine 99, tryptophan 114–leucine 134, and phenylalanine 179–leucine 199. Positions 84 and 98 each coordinate heme b. Histidine 183 and histidine 197 together coordinate heme b. Histidine 202 provides a ligand contact to a ubiquinone. Transmembrane regions (helical) follow at residues tyrosine 227–leucine 247, leucine 289–histidine 309, leucine 321–glycine 341, and phenylalanine 348–proline 368.

It belongs to the cytochrome b family. As to quaternary structure, the cytochrome bc1 complex contains 3 respiratory subunits (MT-CYB, CYC1 and UQCRFS1), 2 core proteins (UQCRC1 and UQCRC2) and probably 6 low-molecular weight proteins. It depends on heme b as a cofactor.

It is found in the mitochondrion inner membrane. In terms of biological role, component of the ubiquinol-cytochrome c reductase complex (complex III or cytochrome b-c1 complex) that is part of the mitochondrial respiratory chain. The b-c1 complex mediates electron transfer from ubiquinol to cytochrome c. Contributes to the generation of a proton gradient across the mitochondrial membrane that is then used for ATP synthesis. This is Cytochrome b (mt-cyb) from Carcharodon carcharias (Great white shark).